The chain runs to 300 residues: GTPase Era (300 aa).

In terms of domain architecture, Era-type G spans 8–176 (RCGYVAIVGR…EAQIAKHLPE (169 aa)). A G1 region spans residues 16–23 (GRPNVGKS). 16 to 23 (GRPNVGKS) provides a ligand contact to GTP. A G2 region spans residues 42 to 46 (QTTRH). The G3 stretch occupies residues 63-66 (DTPG). Residues 63–67 (DTPGM) and 125–128 (NKTD) each bind GTP. Residues 125-128 (NKTD) form a G4 region. The segment at 155–157 (ISA) is G5. In terms of domain architecture, KH type-2 spans 199–283 (VREKIMRQLG…MLNLWVKVKG (85 aa)).

The protein belongs to the TRAFAC class TrmE-Era-EngA-EngB-Septin-like GTPase superfamily. Era GTPase family. As to quaternary structure, monomer.

The protein resides in the cytoplasm. The protein localises to the cell inner membrane. Its function is as follows. An essential GTPase that binds both GDP and GTP, with rapid nucleotide exchange. Plays a role in 16S rRNA processing and 30S ribosomal subunit biogenesis and possibly also in cell cycle regulation and energy metabolism. The polypeptide is GTPase Era (Pseudomonas entomophila (strain L48)).